The primary structure comprises 181 residues: Adenylate kinase (181 aa).

Residue 10 to 15 (GAGKGT) coordinates ATP. The interval 30–59 (STGDLFRANIGEGTPLGLEAKSYIDAGKLV) is NMP. Residues T31, R36, 57–59 (KLV), 85–88 (GFPR), and Q92 each bind AMP. The interval 126 to 132 (ARGRADD) is LID. R127 serves as a coordination point for ATP. Residues R129 and R140 each coordinate AMP. G166 serves as a coordination point for ATP.

It belongs to the adenylate kinase family. In terms of assembly, monomer.

The protein resides in the cytoplasm. It carries out the reaction AMP + ATP = 2 ADP. The protein operates within purine metabolism; AMP biosynthesis via salvage pathway; AMP from ADP: step 1/1. Catalyzes the reversible transfer of the terminal phosphate group between ATP and AMP. Plays an important role in cellular energy homeostasis and in adenine nucleotide metabolism. In Corynebacterium aurimucosum (strain ATCC 700975 / DSM 44827 / CIP 107346 / CN-1) (Corynebacterium nigricans), this protein is Adenylate kinase.